The primary structure comprises 785 residues: Endonuclease MutS2 (785 aa).

335–342 (GPNTGGKT) lines the ATP pocket. The Smr domain occupies 710–785 (LDLRGERYED…GNGVTIVEFK (76 aa)).

The protein belongs to the DNA mismatch repair MutS family. MutS2 subfamily. In terms of assembly, homodimer. Binds to stalled ribosomes, contacting rRNA.

Endonuclease that is involved in the suppression of homologous recombination and thus may have a key role in the control of bacterial genetic diversity. In terms of biological role, acts as a ribosome collision sensor, splitting the ribosome into its 2 subunits. Detects stalled/collided 70S ribosomes which it binds and splits by an ATP-hydrolysis driven conformational change. Acts upstream of the ribosome quality control system (RQC), a ribosome-associated complex that mediates the extraction of incompletely synthesized nascent chains from stalled ribosomes and their subsequent degradation. Probably generates substrates for RQC. The chain is Endonuclease MutS2 from Listeria monocytogenes serotype 4b (strain CLIP80459).